Reading from the N-terminus, the 598-residue chain is Cytochrome P450 monooxygenase phmB (598 aa).

The chain crosses the membrane as a helical span at residues 107–127; it reads VAAKIAALLFVAGLFWAVSVL. N-linked (GlcNAc...) asparagine glycans are attached at residues Asn-171, Asn-428, and Asn-494. Cys-542 provides a ligand contact to heme. 2 N-linked (GlcNAc...) asparagine glycosylation sites follow: Asn-549 and Asn-581.

This sequence belongs to the cytochrome P450 family. Requires heme as cofactor.

The protein resides in the membrane. It functions in the pathway mycotoxin biosynthesis. In terms of biological role, cytochrome P450 monooxygenase; part of the gene cluster that mediates the biosynthesis of the mycotoxins phomacins, leucine-derived cytochalasans with potent actin polymerization-inhibitory activities and monocot-specific antigerminative activities. The first step in the pathway is catalyzed by the hybrid PKS-NRPS phmA, assisted by the enoyl reductase phmE, that are responsible for fusion of the leucine precursor and the polyketide backbone to produce a 2-pyrrolidone intermediate. The polyketide synthase module (PKS) of phmA is responsible for the synthesis of the polyketide backbone and the downstream nonribosomal peptide synthetase (NRPS) amidates the carboxyl end of the polyketide with the leucine precursor. Because phmA lacks a designated enoylreductase (ER) domain, the required activity is provided the enoyl reductase phmE. Reduction by the hydrolyase phmG, followed by dehydration and intra-molecular Diels-Alder cyclization by the Diels-Alderase phmD then yield the required isoindolone-fused macrocycle. A number of oxidative steps catalyzed by the tailoring cytochrome P450 monooxygenase phmB, the FAD-linked oxidoreductase phmC and the short-chain dehydrogenase/reductase phmF, are further required to afford the final products, phomacin D and phomacin E. The polypeptide is Cytochrome P450 monooxygenase phmB (Phaeosphaeria nodorum (strain SN15 / ATCC MYA-4574 / FGSC 10173) (Glume blotch fungus)).